Reading from the N-terminus, the 190-residue chain is Shikimate kinase (190 aa).

Residue 14–19 (GSGKST) participates in ATP binding. S18 is a binding site for Mg(2+). Substrate-binding residues include D36, R60, and G82. R120 is a binding site for ATP. R147 contributes to the substrate binding site.

The protein belongs to the shikimate kinase family. Monomer. The cofactor is Mg(2+).

Its subcellular location is the cytoplasm. The catalysed reaction is shikimate + ATP = 3-phosphoshikimate + ADP + H(+). It functions in the pathway metabolic intermediate biosynthesis; chorismate biosynthesis; chorismate from D-erythrose 4-phosphate and phosphoenolpyruvate: step 5/7. In terms of biological role, catalyzes the specific phosphorylation of the 3-hydroxyl group of shikimic acid using ATP as a cosubstrate. The protein is Shikimate kinase of Chlorobium phaeobacteroides (strain DSM 266 / SMG 266 / 2430).